Consider the following 410-residue polypeptide: MADKVLKGKRKQFINSVGMGTVNGLLDELFEKNVLNQEEMERVKCENATVMDKARALIDSVLRKGPRACQIFICHICEEDTHLAETLGLSSSPQSGNSQNTTDSEVAFPPLPASVNNMPGPAEPEESVDALKLCPHENFVKLCKQRAEEIYPIKERKDRTRLALIICNTTFDHLSLRKGADLDVAGMRRLLTDLGYSVHIKEELTAKDMESELRAFAARPEHKSSDSTFLVFMSHGILSGICGTKYSAEGDPDVLAYDTIFQIFNNRNCLSLKDKPKVIIVQACRGENLGELLISDSPAAPMDSTSQMGSSLSQVGDNLEDDAIYKVHVEKDFIAFCSSTPHHVSWRDVNKGSLFITQLITCFQKYSWCFHLEEVFRKVQQSFEKPNVRAQMPTIERLSMTRYFYLFPGH.

Residues 1-91 (MADKVLKGKR…HLAETLGLSS (91 aa)) form the CARD domain. A propeptide spanning residues 1 to 119 (MADKVLKGKR…PLPASVNNMP (119 aa)) is cleaved from the precursor. Over residues 88 to 104 (GLSSSPQSGNSQNTTDS) the composition is skewed to polar residues. The segment at 88-125 (GLSSSPQSGNSQNTTDSEVAFPPLPASVNNMPGPAEPE) is disordered. Residues His-235 and Cys-284 contribute to the active site. The propeptide occupies 297 to 322 (SPAAPMDSTSQMGSSLSQVGDNLEDD).

The protein belongs to the peptidase C14A family. As to quaternary structure, heterotetramer that consists of two anti-parallel arranged heterodimers, each one formed by a 20 kDa (Caspase-1 subunit p20) and a 10 kDa (Caspase-1 subunit p10) subunit. May be a component of the inflammasome, a protein complex which also includes PYCARD, CARD8 and NLRP2 and whose function would be the activation of pro-inflammatory caspases. Component of the AIM2 PANoptosome complex, a multiprotein complex that drives inflammatory cell death (PANoptosis). Both the p10 and p20 subunits interact with MEFV. Interacts with CARD17P/INCA and CARD18. Interacts with SERPINB1; this interaction regulates CASP1 activity. Heterotetramer that consists of two anti-parallel arranged heterodimers, each one formed by a 20 kDa (Caspase-1 subunit p20) and a 10 kDa (Caspase-1 subunit p10) subunit. The two subunits are derived from the precursor sequence by an autocatalytic mechanism. Post-translationally, ubiquitinated via 'Lys-11'-linked polyubiquitination. Deubiquitinated by USP8.

The protein resides in the cytoplasm. The protein localises to the cell membrane. It catalyses the reaction Strict requirement for an Asp residue at position P1 and has a preferred cleavage sequence of Tyr-Val-Ala-Asp-|-.. Thiol protease involved in a variety of inflammatory processes by proteolytically cleaving other proteins, such as the precursors of the inflammatory cytokines interleukin-1 beta (IL1B) and interleukin 18 (IL18) as well as the pyroptosis inducer Gasdermin-D (GSDMD), into active mature peptides. Plays a key role in cell immunity as an inflammatory response initiator: once activated through formation of an inflammasome complex, it initiates a pro-inflammatory response through the cleavage of the two inflammatory cytokines IL1B and IL18, releasing the mature cytokines which are involved in a variety of inflammatory processes. Cleaves a tetrapeptide after an Asp residue at position P1. Also initiates pyroptosis, a programmed lytic cell death pathway, through cleavage of GSDMD. In contrast to cleavage of interleukin IL1B, recognition and cleavage of GSDMD is not strictly dependent on the consensus cleavage site but depends on an exosite interface on CASP1 that recognizes and binds the Gasdermin-D, C-terminal (GSDMD-CT) part. Cleaves and activates CASP7 in response to bacterial infection, promoting plasma membrane repair. Upon inflammasome activation, during DNA virus infection but not RNA virus challenge, controls antiviral immunity through the cleavage of CGAS, rendering it inactive. In apoptotic cells, cleaves SPHK2 which is released from cells and remains enzymatically active extracellularly. This is Caspase-1 (CASP1) from Felis catus (Cat).